Consider the following 319-residue polypeptide: D-alanine--D-alanine ligase (319 aa).

An ATP-grasp domain is found at 120–315; the sequence is KRVLAQAGVP…YPELLRRLVE (196 aa). 147–198 provides a ligand contact to ATP; that stretch reads DPPFFVKPANTGSSVGISRVERFQDLEAALALAFRYDEKAVVEKALSPVREL. Mg(2+) contacts are provided by Asp270, Glu282, and Asn284.

The protein belongs to the D-alanine--D-alanine ligase family. Mg(2+) serves as cofactor. It depends on Mn(2+) as a cofactor.

It localises to the cytoplasm. The catalysed reaction is 2 D-alanine + ATP = D-alanyl-D-alanine + ADP + phosphate + H(+). The protein operates within cell wall biogenesis; peptidoglycan biosynthesis. Its function is as follows. Cell wall formation. The protein is D-alanine--D-alanine ligase of Thermus thermophilus (strain ATCC BAA-163 / DSM 7039 / HB27).